A 286-amino-acid chain; its full sequence is Bifunctional protein FolD (286 aa).

NADP(+) is bound by residues 164–166 (GRS), S193, and I234.

This sequence belongs to the tetrahydrofolate dehydrogenase/cyclohydrolase family. Homodimer.

It carries out the reaction (6R)-5,10-methylene-5,6,7,8-tetrahydrofolate + NADP(+) = (6R)-5,10-methenyltetrahydrofolate + NADPH. The enzyme catalyses (6R)-5,10-methenyltetrahydrofolate + H2O = (6R)-10-formyltetrahydrofolate + H(+). It participates in one-carbon metabolism; tetrahydrofolate interconversion. Functionally, catalyzes the oxidation of 5,10-methylenetetrahydrofolate to 5,10-methenyltetrahydrofolate and then the hydrolysis of 5,10-methenyltetrahydrofolate to 10-formyltetrahydrofolate. In Maridesulfovibrio salexigens (strain ATCC 14822 / DSM 2638 / NCIMB 8403 / VKM B-1763) (Desulfovibrio salexigens), this protein is Bifunctional protein FolD.